The sequence spans 380 residues: Chorismate synthase (380 aa).

Arginine 49 contributes to the NADP(+) binding site. FMN is bound by residues glycine 288, 303 to 307 (KPPSS), and arginine 330.

This sequence belongs to the chorismate synthase family. Requires FMNH2 as cofactor.

It catalyses the reaction 5-O-(1-carboxyvinyl)-3-phosphoshikimate = chorismate + phosphate. It functions in the pathway metabolic intermediate biosynthesis; chorismate biosynthesis; chorismate from D-erythrose 4-phosphate and phosphoenolpyruvate: step 7/7. In terms of biological role, catalyzes the anti-1,4-elimination of the C-3 phosphate and the C-6 proR hydrogen from 5-enolpyruvylshikimate-3-phosphate (EPSP) to yield chorismate, which is the branch point compound that serves as the starting substrate for the three terminal pathways of aromatic amino acid biosynthesis. This reaction introduces a second double bond into the aromatic ring system. This chain is Chorismate synthase, found in Aeropyrum pernix (strain ATCC 700893 / DSM 11879 / JCM 9820 / NBRC 100138 / K1).